Reading from the N-terminus, the 353-residue chain is MRIVEEDEKNGVIELVPETLDDLWHLSHIIEEGDLLSARTTRRIQDTSGEKIRSDRGVKKTFYLGIRVETVSFHIYTGRLRATGVIERGPEDLVPMGSHHTLEVKLNTPLRIQKEHWSRWTLKRLRMAVRASKNLKAIILVMEDDVAELGLIRQYGVEYRGPITGHIPGKRIQQRDRGKLRREFYESIVESLQKYGDLETIIIAGPGFYKSDFYDYLMERYPEIAKKAVLENTGTGGRAGISEVLRKGTVERVSSEKRIASEIRNVNEFLEKLARDPDSVVYGKVEVMDAINMGAVEKLLVLDRVVSREDIEGYLDMVESMGGSVVLISSEHEGGKQLESLGGLAGILRFKIQ.

The protein belongs to the eukaryotic release factor 1 family. Pelota subfamily. Monomer. Requires a divalent metal cation as cofactor.

The protein localises to the cytoplasm. Its function is as follows. May function in recognizing stalled ribosomes, interact with stem-loop structures in stalled mRNA molecules, and effect endonucleolytic cleavage of the mRNA. May play a role in the release non-functional ribosomes and degradation of damaged mRNAs. Has endoribonuclease activity. The polypeptide is Protein pelota homolog (Methanothermobacter thermautotrophicus (strain ATCC 29096 / DSM 1053 / JCM 10044 / NBRC 100330 / Delta H) (Methanobacterium thermoautotrophicum)).